Consider the following 742-residue polypeptide: MTISNTRPITPDLIASHGLKPDEYERILNLIGREPTFTELGIFSAMWNEHCSYKSSKKWLRMLPTKGPRVIQGPGENAGVVDIDDGDCVVFKMESHNHPSYIEPYQGAATGVGGILRDVFTMGARPIAAMNALRFGSPDHPKTRHLVSGVVAGVGGYGNSFGVPTVGGEVEFDARYNGNILVNAFAAGLAKSDAIFYSKAEGVGLPVVYLGAKTGRDGVGGATMASAEFDESIEEKRPTVQVGDPFTEKCLLEACLELMQTGAVIAIQDMGAAGLTCSAVEMGAKGDLGIELDLDKVPVREEHMTAYEMMLSESQERMLMVLRPEKEEEAKAIFVKWGLDFAIVGKTTDDLRFRILHQGDEVANLPIKELGDEAPEYDRPWTPAKTPSPLATNDIPQADVAEALLKLVGSANNSSRRWVYEQYDTLIQGNSLQLPGGDAGVVRVEGHATKALAFSSDVTPRYVEADPYEGGKQAVAECWRNLTATGALPLAATDNLNFGNPERPEIMSQFVHAIKGIGEACRALDFPIVSGNVSLYNETNGQGILPTPTIGGVGLISDWARMARIRFAAADEAILLAGAPEGMGSHIAQSVYMRDIHGRTDGPAPHVDLAHERKIGDFVRDLIADGLVTAVHDCSSGGLALAVAEMAIASGIGATIAAPENDPIAAFYGEDQGRYVVTVAADKIDAVAARAAVAGIDLPVIGKTGGDSVKLGDANTVSVNELRSAHEAWFPTYMGGDLAPDN.

Residue histidine 50 is part of the active site. Residues tyrosine 53 and lysine 92 each contribute to the ATP site. Glutamate 94 is a binding site for Mg(2+). Residues 95 to 98 (SHNH) and arginine 117 each bind substrate. The active-site Proton acceptor is histidine 96. A Mg(2+)-binding site is contributed by aspartate 118. Glutamine 241 provides a ligand contact to substrate. A Mg(2+)-binding site is contributed by aspartate 269. 313 to 315 (ESQ) serves as a coordination point for substrate. ATP contacts are provided by aspartate 494 and glycine 531. Asparagine 532 provides a ligand contact to Mg(2+). Serine 534 contacts substrate.

Belongs to the FGAMS family. Monomer. Part of the FGAM synthase complex composed of 1 PurL, 1 PurQ and 2 PurS subunits.

The protein localises to the cytoplasm. The catalysed reaction is N(2)-formyl-N(1)-(5-phospho-beta-D-ribosyl)glycinamide + L-glutamine + ATP + H2O = 2-formamido-N(1)-(5-O-phospho-beta-D-ribosyl)acetamidine + L-glutamate + ADP + phosphate + H(+). It participates in purine metabolism; IMP biosynthesis via de novo pathway; 5-amino-1-(5-phospho-D-ribosyl)imidazole from N(2)-formyl-N(1)-(5-phospho-D-ribosyl)glycinamide: step 1/2. Functionally, part of the phosphoribosylformylglycinamidine synthase complex involved in the purines biosynthetic pathway. Catalyzes the ATP-dependent conversion of formylglycinamide ribonucleotide (FGAR) and glutamine to yield formylglycinamidine ribonucleotide (FGAM) and glutamate. The FGAM synthase complex is composed of three subunits. PurQ produces an ammonia molecule by converting glutamine to glutamate. PurL transfers the ammonia molecule to FGAR to form FGAM in an ATP-dependent manner. PurS interacts with PurQ and PurL and is thought to assist in the transfer of the ammonia molecule from PurQ to PurL. This chain is Phosphoribosylformylglycinamidine synthase subunit PurL, found in Sinorhizobium fredii (strain NBRC 101917 / NGR234).